The primary structure comprises 2177 residues: Protein sidekick-2 (2177 aa).

The signal sequence occupies residues 1 to 26 (MKGLGVPAAALLWGGLSALLPPSLPA). The Extracellular portion of the chain corresponds to 27-1937 (DDVSPYFKTE…ANPFYEEWWF (1911 aa)). Ig-like C2-type domains follow at residues 31–113 (PYFK…TEVQ), 118–205 (GSFE…QPIT), 220–299 (PTII…SSVP), 313–401 (PQFV…TYLA), 407–496 (PNIT…ADLV), and 501–590 (TRIT…AHLR). A disulfide bridge links Cys-53 with Cys-96. 2 N-linked (GlcNAc...) asparagine glycosylation sites follow: Asn-198 and Asn-228. 2 disulfides stabilise this stretch: Cys-242–Cys-289 and Cys-335–Cys-385. N-linked (GlcNAc...) asparagine glycosylation occurs at Asn-408. Disulfide bonds link Cys-428–Cys-480 and Cys-522–Cys-574. 7 N-linked (GlcNAc...) asparagine glycosylation sites follow: Asn-582, Asn-614, Asn-709, Asn-748, Asn-809, Asn-941, and Asn-953. Fibronectin type-III domains lie at 597–693 (APES…LPEE), 698–794 (PPQN…TLQG), 799–898 (PPGN…THED), 902–996 (PVGH…VPPE), 1000–1099 (APTN…TLQA), 1104–1202 (APAN…TRES), 1207–1304 (GPSN…TLDD), 1305–1402 (VPGP…TEKR), 1407–1504 (PPSK…TLQA), 1509–1626 (APTI…VGEA), 1631–1727 (APQN…TQQA), 1731–1826 (APGS…TGPG), and 1829–1928 (APGP…AQKA). 11 N-linked (GlcNAc...) asparagine glycosylation sites follow: Asn-1107, Asn-1210, Asn-1261, Asn-1346, Asn-1462, Asn-1580, Asn-1593, Asn-1675, Asn-1694, Asn-1746, and Asn-1820. The helical transmembrane segment at 1938–1958 (LVVIALVGLIFILLLVFVLII) threads the bilayer. Residues 1959–2177 (RGQSKKYAKK…APIGGFSSFV (219 aa)) are Cytoplasmic-facing. 2 disordered regions span residues 2044–2071 (AESSSLTEKPSEVSDSQGSDSEYEVDPA) and 2103–2177 (QAYS…SSFV). Composition is skewed to polar residues over residues 2045–2063 (ESSSLTEKPSEVSDSQGSD) and 2119–2130 (PLSNSTSTQQGS). The span at 2142–2151 (PQTPGNPPSQ) shows a compositional bias: pro residues. The short motif at 2171–2177 (GGFSSFV) is the PDZ-binding element.

This sequence belongs to the sidekick family. Homodimer; mediates homophilic interactions to promote cell adhesion. As to expression, expressed by non-overlapping subsets of retinal neurons. SDK1, SDK2, DSCAM and DSCAML1 are expressed in non-overlapping subsets of interneurons and retinal ganglion cells (RGCs) that form synapses in distinct inner plexiform layer (IPL) sublaminae.

It is found in the cell membrane. It localises to the synapse. In terms of biological role, adhesion molecule that promotes lamina-specific synaptic connections in the retina. Expressed in specific subsets of interneurons and retinal ganglion cells (RGCs) and promotes synaptic connectivity via homophilic interactions. The chain is Protein sidekick-2 from Gallus gallus (Chicken).